Consider the following 308-residue polypeptide: Uridine diphosphate glucose pyrophosphatase NUDT22 (308 aa).

Substrate is bound by residues Phe-56, Tyr-86, Arg-138, Ala-143, Asp-150, His-155, and Glu-157. Residues 117-284 enclose the Nudix hydrolase domain; that stretch reads ADPLGVGAAL…KGAILLYNRH (168 aa). The Nudix box motif lies at 174-195; that stretch reads GLLVVRELFSSVLQEICDEVNL. 2 residues coordinate Mg(2+): Glu-188 and Glu-192. Ser-273 contacts substrate.

It belongs to the Nudix hydrolase family. The cofactor is Mg(2+).

It carries out the reaction UDP-sugar + H2O = UMP + alpha-D-aldose 1-phosphate.. Hydrolyzes UDP-glucose to glucose 1-phosphate and UMP and UDP-galactose to galactose 1-phosphate and UMP. Preferred substrate is UDP-glucose. This is Uridine diphosphate glucose pyrophosphatase NUDT22 (Nudt22) from Mus musculus (Mouse).